The primary structure comprises 240 residues: tRNA (guanine-N(1)-)-methyltransferase (240 aa).

S-adenosyl-L-methionine-binding positions include Gly110 and 130 to 135 (IGDYVL).

Belongs to the RNA methyltransferase TrmD family. As to quaternary structure, homodimer.

Its subcellular location is the cytoplasm. The catalysed reaction is guanosine(37) in tRNA + S-adenosyl-L-methionine = N(1)-methylguanosine(37) in tRNA + S-adenosyl-L-homocysteine + H(+). Its function is as follows. Specifically methylates guanosine-37 in various tRNAs. This is tRNA (guanine-N(1)-)-methyltransferase from Macrococcus caseolyticus (strain JCSC5402) (Macrococcoides caseolyticum).